Consider the following 367-residue polypeptide: MAAVVFDAAILSKQEAIPAQFVWPADEAPAADDGVVEEIAIPVVDLAAFLASGGIGRDVAEACERHGFFQVVNHGVDPALLAEAYRCCDAFYARPLAEKQRARRRPGENHGYASSFTGRFDCKLPWKETMSFNCSAAPGNARMVADYFVDALGEEYRHMGEVYQEYCDVMTRLALDVTEVLAVALGLGRGELRGFFADGDPVMRLNHYPPCRQPHLTLGTGPHRDPTSLTLLHQDDVGGLQVLPDDAAAAAGGWRAVRPRADAFVVNIGDTFAALTNGRHASCLHRAVVNGRVARRSLTFFLNPRLDRVVSPPPALVDAAHPRAFPDFTWREFLEFTQRHYRSDTNTMDAFVAWIKQRNGYESLDKY.

Residues 198 to 304 (DGDPVMRLNH…RRSLTFFLNP (107 aa)) enclose the Fe2OG dioxygenase domain. Position 208 (Tyr-208) interacts with 2-oxoglutarate. Positions 223, 225, and 285 each coordinate Fe cation. 2-oxoglutarate is bound by residues Arg-295 and Ser-297.

This sequence belongs to the iron/ascorbate-dependent oxidoreductase family. The cofactor is Fe(2+). It depends on L-ascorbate as a cofactor.

The catalysed reaction is gibberellin A12 + 2 2-oxoglutarate + 3 O2 + H(+) = gibberellin A9 + 2 succinate + 3 CO2 + 2 H2O. The enzyme catalyses gibberellin A53 + 2 2-oxoglutarate + 3 O2 + H(+) = gibberellin A20 + 2 succinate + 3 CO2 + 2 H2O. In terms of biological role, key oxidase enzyme in the biosynthesis of gibberellin. Catalyzes the formation of bioactive gibberellins (GAs) via a three-step oxidation at C-20 of the GA skeleton. Controls the elongation of the vegetative shoot and plant height by the regulation of active gibberellin levels. The polypeptide is Gibberellin 20 oxidase 3 (Oryza sativa subsp. japonica (Rice)).